Consider the following 134-residue polypeptide: Putative nickel-responsive regulator (134 aa).

Residues His78, His89, His91, and Cys97 each coordinate Ni(2+).

Belongs to the transcriptional regulatory CopG/NikR family. Ni(2+) serves as cofactor.

Transcriptional regulator. The polypeptide is Putative nickel-responsive regulator (Chlorobaculum tepidum (strain ATCC 49652 / DSM 12025 / NBRC 103806 / TLS) (Chlorobium tepidum)).